Reading from the N-terminus, the 274-residue chain is Penicillin-insensitive murein endopeptidase (274 aa).

Residues 1–19 form the signal peptide; sequence MNKTAIALLALLASSASLA. Intrachain disulfides connect Cys44–Cys265, Cys187–Cys235, and Cys216–Cys223. Zn(2+) is bound by residues His110, His113, Asp120, Asp147, His150, and His211.

It belongs to the peptidase M74 family. In terms of assembly, dimer. Zn(2+) is required as a cofactor.

It is found in the periplasm. In terms of biological role, murein endopeptidase that cleaves the D-alanyl-meso-2,6-diamino-pimelyl amide bond that connects peptidoglycan strands. Likely plays a role in the removal of murein from the sacculus. This Shigella sonnei (strain Ss046) protein is Penicillin-insensitive murein endopeptidase.